Consider the following 293-residue polypeptide: Diaminopimelate epimerase (293 aa).

The substrate site is built by N17, Q49, and N69. C78 serves as the catalytic Proton donor. Residues 79-80, N169, N203, and 221-222 contribute to the substrate site; these read GN and ER. C230 serves as the catalytic Proton acceptor. Residue 231-232 participates in substrate binding; sequence GS.

This sequence belongs to the diaminopimelate epimerase family. As to quaternary structure, homodimer.

The protein resides in the cytoplasm. The enzyme catalyses (2S,6S)-2,6-diaminopimelate = meso-2,6-diaminopimelate. It functions in the pathway amino-acid biosynthesis; L-lysine biosynthesis via DAP pathway; DL-2,6-diaminopimelate from LL-2,6-diaminopimelate: step 1/1. Functionally, catalyzes the stereoinversion of LL-2,6-diaminopimelate (L,L-DAP) to meso-diaminopimelate (meso-DAP), a precursor of L-lysine and an essential component of the bacterial peptidoglycan. This is Diaminopimelate epimerase from Methylobacterium sp. (strain 4-46).